Consider the following 249-residue polypeptide: MSISSDTSGSVPGSPIDLEPESETICHWQSCEQDLLTLDNLVHHIHNGTTSNLRLISNINSILDHIGNRRPKYTCEWDDCPRKGMVQTSRFALVAHLRSHTGEKPFICSVPECDRSFTRSDALAKHMRTVHEADTLRPSDPIPKAHPMHPQNVANAMVQSAREARAQQQMHGVGNTNEDVENWLDAASMPKTSHDMYRLQKRKLQWVKEERTMLANHLEALERKLIDARNRKEKILNEIVKQVDPSISR.

C2H2-type zinc fingers lie at residues 73–100 and 106–131; these read YTCE…LRSH and FICS…RTVH.

As to quaternary structure, component of the INO80 chromatin remodeling complex.

Its subcellular location is the nucleus. It is found in the cytoplasm. Functionally, component of the INO80 complex which remodels chromatin by shifting nucleosomes and is involved in DNA repair. This Schizosaccharomyces pombe (strain 972 / ATCC 24843) (Fission yeast) protein is INO80 complex subunit 1 (iec1).